We begin with the raw amino-acid sequence, 878 residues long: Phosphoenolpyruvate carboxylase (878 aa).

Active-site residues include histidine 140 and lysine 545.

Belongs to the PEPCase type 1 family. Mg(2+) serves as cofactor.

The enzyme catalyses oxaloacetate + phosphate = phosphoenolpyruvate + hydrogencarbonate. Its function is as follows. Forms oxaloacetate, a four-carbon dicarboxylic acid source for the tricarboxylic acid cycle. In Pseudomonas paraeruginosa (strain DSM 24068 / PA7) (Pseudomonas aeruginosa (strain PA7)), this protein is Phosphoenolpyruvate carboxylase.